The sequence spans 354 residues: Transcription activator of gluconeogenesis ERT1-1 (354 aa).

A disordered region spans residues 1 to 29 (MSFYPILRGPAKQESPPPPPAPKKRRKTA). Residues 32–60 (CLHCQKAHLTCDEGRPCARCIKKNMGDQC) constitute a DNA-binding region (zn(2)-C6 fungal-type). 2 disordered regions span residues 71-111 (LVGL…FGSS) and 128-169 (DTSS…QGSP). Residues 81–98 (QATQQKQQQQQQQQQAVQ) are compositionally biased toward low complexity. Polar residues predominate over residues 159-169 (SQTAGTPQGSP).

Belongs to the ERT1/acuK family.

It is found in the nucleus. Functionally, transcription factor which regulates nonfermentable carbon utilization. Activator of gluconeogenetic genes. The sequence is that of Transcription activator of gluconeogenesis ERT1-1 (ERT1-1) from Yarrowia lipolytica (strain CLIB 122 / E 150) (Yeast).